The primary structure comprises 65 residues: UPF0434 protein Mmwyl1_2153 (65 aa).

It belongs to the UPF0434 family.

This Marinomonas sp. (strain MWYL1) protein is UPF0434 protein Mmwyl1_2153.